Reading from the N-terminus, the 271-residue chain is Glutamate racemase (271 aa).

Substrate-binding positions include Asp10–Ser11 and Tyr42–Gly43. The Proton donor/acceptor role is filled by Cys73. Asn74 to Thr75 provides a ligand contact to substrate. The active-site Proton donor/acceptor is the Cys183. Substrate is bound at residue Thr184 to His185.

This sequence belongs to the aspartate/glutamate racemases family.

The catalysed reaction is L-glutamate = D-glutamate. It functions in the pathway cell wall biogenesis; peptidoglycan biosynthesis. Functionally, provides the (R)-glutamate required for cell wall biosynthesis. In Lactococcus lactis subsp. cremoris (strain MG1363), this protein is Glutamate racemase.